Consider the following 394-residue polypeptide: Elongation factor Tu 1 (394 aa).

The tr-type G domain occupies 10–204 (KPHVNVGTIG…ALDNYIPEPE (195 aa)). A G1 region spans residues 19–26 (GHVDHGKT). 19–26 (GHVDHGKT) provides a ligand contact to GTP. Threonine 26 contributes to the Mg(2+) binding site. Positions 60-64 (GITIS) are G2. The interval 81 to 84 (DCPG) is G3. Residues 81–85 (DCPGH) and 136–139 (NKCD) contribute to the GTP site. The tract at residues 136 to 139 (NKCD) is G4. The tract at residues 174–176 (SAL) is G5.

Belongs to the TRAFAC class translation factor GTPase superfamily. Classic translation factor GTPase family. EF-Tu/EF-1A subfamily. Monomer.

Its subcellular location is the cytoplasm. The enzyme catalyses GTP + H2O = GDP + phosphate + H(+). Its function is as follows. GTP hydrolase that promotes the GTP-dependent binding of aminoacyl-tRNA to the A-site of ribosomes during protein biosynthesis. This chain is Elongation factor Tu 1, found in Photobacterium profundum (strain SS9).